Here is a 221-residue protein sequence, read N- to C-terminus: Protein-L-isoaspartate O-methyltransferase (221 aa).

Serine 64 is an active-site residue.

It belongs to the methyltransferase superfamily. L-isoaspartyl/D-aspartyl protein methyltransferase family.

The protein localises to the cytoplasm. It carries out the reaction [protein]-L-isoaspartate + S-adenosyl-L-methionine = [protein]-L-isoaspartate alpha-methyl ester + S-adenosyl-L-homocysteine. Catalyzes the methyl esterification of L-isoaspartyl residues in peptides and proteins that result from spontaneous decomposition of normal L-aspartyl and L-asparaginyl residues. It plays a role in the repair and/or degradation of damaged proteins. In Cytophaga hutchinsonii (strain ATCC 33406 / DSM 1761 / CIP 103989 / NBRC 15051 / NCIMB 9469 / D465), this protein is Protein-L-isoaspartate O-methyltransferase.